Reading from the N-terminus, the 181-residue chain is Trafficking protein particle complex subunit 3 homolog (181 aa).

Cys-70 carries the S-palmitoyl cysteine lipid modification.

It belongs to the TRAPP small subunits family. BET3 subfamily. Homodimer. Part of the multisubunit TRAPP (transport protein particle) complex.

The protein resides in the golgi apparatus. It is found in the cis-Golgi network. Its subcellular location is the endoplasmic reticulum. Its function is as follows. May play a role in vesicular transport from endoplasmic reticulum to Golgi. Required for the systemic spread of the RNAi response. In Caenorhabditis briggsae, this protein is Trafficking protein particle complex subunit 3 homolog.